The sequence spans 332 residues: tRNA dimethylallyltransferase (332 aa).

17–24 (GPTCSGKS) contacts ATP. 19–24 (TCSGKS) is a substrate binding site. 2 interaction with substrate tRNA regions span residues 42–45 (DSMQ) and 166–170 (QRISR).

The protein belongs to the IPP transferase family. In terms of assembly, monomer. The cofactor is Mg(2+).

The catalysed reaction is adenosine(37) in tRNA + dimethylallyl diphosphate = N(6)-dimethylallyladenosine(37) in tRNA + diphosphate. Catalyzes the transfer of a dimethylallyl group onto the adenine at position 37 in tRNAs that read codons beginning with uridine, leading to the formation of N6-(dimethylallyl)adenosine (i(6)A). This Gluconobacter oxydans (strain 621H) (Gluconobacter suboxydans) protein is tRNA dimethylallyltransferase.